Reading from the N-terminus, the 188-residue chain is Ribosome-recycling factor (188 aa).

It belongs to the RRF family.

Its subcellular location is the cytoplasm. Its function is as follows. Responsible for the release of ribosomes from messenger RNA at the termination of protein biosynthesis. May increase the efficiency of translation by recycling ribosomes from one round of translation to another. This is Ribosome-recycling factor from Gluconacetobacter diazotrophicus (strain ATCC 49037 / DSM 5601 / CCUG 37298 / CIP 103539 / LMG 7603 / PAl5).